The following is a 123-amino-acid chain: Small ribosomal subunit protein uS12 (123 aa).

The interval 1-32 (MPTINQLIRKPREAQKARDKAPALQSSPQKRG) is disordered. Over residues 10–21 (KPREAQKARDKA) the composition is skewed to basic and acidic residues. Position 89 is a 3-methylthioaspartic acid (Asp89).

This sequence belongs to the universal ribosomal protein uS12 family. In terms of assembly, part of the 30S ribosomal subunit. Contacts proteins S8 and S17. May interact with IF1 in the 30S initiation complex.

With S4 and S5 plays an important role in translational accuracy. Its function is as follows. Interacts with and stabilizes bases of the 16S rRNA that are involved in tRNA selection in the A site and with the mRNA backbone. Located at the interface of the 30S and 50S subunits, it traverses the body of the 30S subunit contacting proteins on the other side and probably holding the rRNA structure together. The combined cluster of proteins S8, S12 and S17 appears to hold together the shoulder and platform of the 30S subunit. This is Small ribosomal subunit protein uS12 from Azorhizobium caulinodans (strain ATCC 43989 / DSM 5975 / JCM 20966 / LMG 6465 / NBRC 14845 / NCIMB 13405 / ORS 571).